We begin with the raw amino-acid sequence, 248 residues long: tRNA (guanine-N(1)-)-methyltransferase (248 aa).

S-adenosyl-L-methionine is bound by residues Gly113 and 133-138 (VGDYVL).

It belongs to the RNA methyltransferase TrmD family. In terms of assembly, homodimer.

It localises to the cytoplasm. It catalyses the reaction guanosine(37) in tRNA + S-adenosyl-L-methionine = N(1)-methylguanosine(37) in tRNA + S-adenosyl-L-homocysteine + H(+). Its function is as follows. Specifically methylates guanosine-37 in various tRNAs. The protein is tRNA (guanine-N(1)-)-methyltransferase of Shewanella oneidensis (strain ATCC 700550 / JCM 31522 / CIP 106686 / LMG 19005 / NCIMB 14063 / MR-1).